The following is a 291-amino-acid chain: Malolactic fermentation system transcriptional activator (291 aa).

Residues 1-60 enclose the HTH lysR-type domain; the sequence is MSLNLRDLEYFYQLSKLRSFTNVAKHFRVSQPTISYAIKRLETYYDCDLFYKDSSHQVVD. Residues 20–39 constitute a DNA-binding region (H-T-H motif); it reads FTNVAKHFRVSQPTISYAIK.

The protein belongs to the LysR transcriptional regulatory family.

It is found in the cytoplasm. Functionally, required for malolactic fermentation. It is most probably a transcriptional activator. In Lactococcus lactis subsp. lactis (strain IL1403) (Streptococcus lactis), this protein is Malolactic fermentation system transcriptional activator (mleR).